The sequence spans 399 residues: Centrosomal protein 43 (399 aa).

The region spanning 70 to 102 (DGRLVASLVAEFLQFFNLDFTLAVFHPETSTIQ) is the LisH domain. The segment at 139–217 (EKGPTSVEGA…LSESKSKSSL (79 aa)) is disordered. At Thr143 the chain carries Phosphothreonine. Ser152 and Ser160 each carry phosphoserine. The span at 163–172 (GKTSVNSTPS) shows a compositional bias: polar residues. Thr170 is subject to Phosphothreonine. Residues 175–186 (PRYKGQGKKKTS) show a composition bias toward basic residues. Low complexity predominate over residues 197 to 217 (SETSQSEPSVSLSESKSKSSL). At Ser202 the chain carries Phosphoserine. Thr234 is modified (phosphothreonine). The interval 239–309 (DKSALCPDED…PSLTDAESKR (71 aa)) is disordered. Residues 245-256 (PDEDDVEGDSFF) are compositionally biased toward acidic residues. Basic and acidic residues predominate over residues 259–275 (PIPKPEKTYGWRSEPRK). Residues 290 to 302 (RSGLSSLAGAPSL) show a composition bias toward low complexity. 3 positions are modified to phosphoserine: Ser301, Ser326, and Ser331. The segment at 328-357 (GLGSGEDEDYVDDFNSASHRSEKSELSIGE) is disordered. A Phosphotyrosine modification is found at Tyr337.

It belongs to the CEP43 family. Homodimer. Part of a ternary complex that contains CEP350, CEP43 and MAPRE1. Interacts directly with CEP350 and MAPRE1. Interacts with CEP19. Interacts (via N-terminus) with CEP350 (via C-terminus).

The protein localises to the cytoplasm. The protein resides in the cytoskeleton. Its subcellular location is the microtubule organizing center. It localises to the centrosome. It is found in the centriole. The protein localises to the cilium basal body. Required for anchoring microtubules to the centrosomes. Required for ciliation. The sequence is that of Centrosomal protein 43 (Cep43) from Rattus norvegicus (Rat).